The primary structure comprises 155 residues: Large-conductance mechanosensitive channel (155 aa).

2 consecutive transmembrane segments (helical) span residues 25 to 45 and 98 to 118; these read VLDL…VTSL and GDFI…FLIV.

The protein belongs to the MscL family. As to quaternary structure, homopentamer.

It localises to the cell inner membrane. In terms of biological role, channel that opens in response to stretch forces in the membrane lipid bilayer. May participate in the regulation of osmotic pressure changes within the cell. This chain is Large-conductance mechanosensitive channel, found in Novosphingobium aromaticivorans (strain ATCC 700278 / DSM 12444 / CCUG 56034 / CIP 105152 / NBRC 16084 / F199).